Here is a 208-residue protein sequence, read N- to C-terminus: Large ribosomal subunit protein uL3 (208 aa).

The protein belongs to the universal ribosomal protein uL3 family. As to quaternary structure, part of the 50S ribosomal subunit. Forms a cluster with proteins L14 and L19.

Functionally, one of the primary rRNA binding proteins, it binds directly near the 3'-end of the 23S rRNA, where it nucleates assembly of the 50S subunit. This is Large ribosomal subunit protein uL3 from Salinibacter ruber (strain DSM 13855 / M31).